The sequence spans 221 residues: uncharacterized protein (221 aa).

6 consecutive transmembrane segments (helical) span residues 33–55 (YFLL…ISYI), 70–92 (FGYR…QKIV), 99–121 (LEML…FIII), 125–147 (YGAY…YTLL), 154–176 (YFND…SFWI), and 186–208 (IISM…ITLI).

It is found in the cell membrane. This is an uncharacterized protein from Aquifex aeolicus (strain VF5).